The following is a 1230-amino-acid chain: Formin-like protein 14 (1230 aa).

A Phosphatase tensin-type domain is found at 1–194 (MSLLSRFFYK…QYVARRNINS (194 aa)). Residue Cys127 is the Phosphocysteine intermediate of the active site. Residues 200-339 (ERALSLDCVI…FRAEVLFGEV (140 aa)) form the C2 tensin-type domain. Disordered stretches follow at residues 412-432 (FNSP…SSDE), 460-822 (HESS…LKPL), and 1187-1230 (ENEK…RHRT). Positions 484–496 (DNPLNLPSDPPSS) are enriched in low complexity. Pro residues-rich tracts occupy residues 503–514 (LPPPPPPPPPPL), 524–535 (SQPPPPPPPPPL), 545–556 (SQPPPPPPPPPL), and 566–575 (SQPPPPPPLP). The segment covering 579-591 (NRDPLTTLHQPIN) has biased composition (polar residues). 7 stretches are compositionally biased toward pro residues: residues 592-630 (KTPP…PPPS), 637-649 (PSAP…PPPS), 660-672 (QPPP…PPTR), 679-688 (APPPPPPPPT), 699-711 (PSTP…PPPK), 718-728 (PKPPAPPPLPP), and 735-766 (APPP…PPPG). The FH2 domain maps to 809-1207 (VPTAAPKKTA…KLEKEAIKEK (399 aa)). Over residues 1187-1215 (ENEKQAEAEKKKLEKEAIKEKSATKKDGV) the composition is skewed to basic and acidic residues.

It belongs to the formin-like family. Class-II subfamily.

This chain is Formin-like protein 14 (FH14), found in Arabidopsis thaliana (Mouse-ear cress).